The chain runs to 183 residues: Ribosome-recycling factor (183 aa).

Belongs to the RRF family.

Its subcellular location is the cytoplasm. Responsible for the release of ribosomes from messenger RNA at the termination of protein biosynthesis. May increase the efficiency of translation by recycling ribosomes from one round of translation to another. The polypeptide is Ribosome-recycling factor (Mycoplasmoides gallisepticum (strain R(low / passage 15 / clone 2)) (Mycoplasma gallisepticum)).